We begin with the raw amino-acid sequence, 343 residues long: Anthranilate phosphoribosyltransferase (343 aa).

Residues Gly78, 81–82 (GD), Thr86, 88–91 (NIST), 106–114 (KHGNRSVSS), and Ser118 contribute to the 5-phospho-alpha-D-ribose 1-diphosphate site. Position 78 (Gly78) interacts with anthranilate. Ser90 serves as a coordination point for Mg(2+). Position 109 (Asn109) interacts with anthranilate. Arg164 is a binding site for anthranilate. The Mg(2+) site is built by Asp223 and Glu224.

The protein belongs to the anthranilate phosphoribosyltransferase family. As to quaternary structure, homodimer. The cofactor is Mg(2+).

It carries out the reaction N-(5-phospho-beta-D-ribosyl)anthranilate + diphosphate = 5-phospho-alpha-D-ribose 1-diphosphate + anthranilate. The protein operates within amino-acid biosynthesis; L-tryptophan biosynthesis; L-tryptophan from chorismate: step 2/5. Its function is as follows. Catalyzes the transfer of the phosphoribosyl group of 5-phosphorylribose-1-pyrophosphate (PRPP) to anthranilate to yield N-(5'-phosphoribosyl)-anthranilate (PRA). The protein is Anthranilate phosphoribosyltransferase of Chlamydia felis (strain Fe/C-56) (Chlamydophila felis).